The chain runs to 185 residues: Ribosome-recycling factor (185 aa).

It belongs to the RRF family.

It is found in the cytoplasm. Responsible for the release of ribosomes from messenger RNA at the termination of protein biosynthesis. May increase the efficiency of translation by recycling ribosomes from one round of translation to another. The sequence is that of Ribosome-recycling factor from Vibrio vulnificus (strain YJ016).